The primary structure comprises 434 residues: Probable phosphatidylinositol 3,4,5-trisphosphate 3-phosphatase TEP1 (434 aa).

One can recognise a Phosphatase tensin-type domain in the interval 33–255; the sequence is KTKNDIGLRL…RYHEFFITHE (223 aa). C193 serves as the catalytic Phosphocysteine intermediate.

It carries out the reaction a 1,2-diacyl-sn-glycero-3-phospho-(1D-myo-inositol-3,4,5-trisphosphate) + H2O = a 1,2-diacyl-sn-glycero-3-phospho-(1D-myo-inositol-4,5-bisphosphate) + phosphate. May act as a phosphoinositide 3-phosphatase by regulating PtdIns(3,4,5)P3 levels. The sequence is that of Probable phosphatidylinositol 3,4,5-trisphosphate 3-phosphatase TEP1 (TEP1) from Saccharomyces cerevisiae (strain ATCC 204508 / S288c) (Baker's yeast).